Consider the following 210-residue polypeptide: Thymidylate kinase (210 aa).

9–16 is an ATP binding site; that stretch reads GLEGAGKS.

This sequence belongs to the thymidylate kinase family.

It catalyses the reaction dTMP + ATP = dTDP + ADP. Phosphorylation of dTMP to form dTDP in both de novo and salvage pathways of dTTP synthesis. In Aliivibrio salmonicida (strain LFI1238) (Vibrio salmonicida (strain LFI1238)), this protein is Thymidylate kinase.